A 78-amino-acid chain; its full sequence is Major outer membrane lipoprotein Lpp (78 aa).

The N-terminal stretch at 1–20 is a signal peptide; the sequence is MNRTKLVLGAVILGSTLLAG. Cys-21 carries the N-palmitoyl cysteine lipid modification. The S-diacylglycerol cysteine moiety is linked to residue Cys-21. 2 consecutive repeats follow at residues 24 to 34 and 38 to 48; these read NAKIDQLSSDV and NAKVDQLSNDV. Positions 27–75 form a coiled coil; sequence IDQLSSDVQTLNAKVDQLSNDVNAIRSDVQAAKDDAARANQRLDNQVRT. An N6-murein peptidoglycan lysine modification is found at Lys-78.

The protein belongs to the Lpp family. As to quaternary structure, homotrimer.

It is found in the cell outer membrane. The protein localises to the secreted. The protein resides in the cell wall. Its function is as follows. A highly abundant outer membrane lipoprotein that controls the distance between the inner and outer membranes. The only protein known to be covalently linked to the peptidoglycan network (PGN). Also non-covalently binds the PGN. The link between the cell outer membrane and PGN contributes to maintenance of the structural and functional integrity of the cell envelope, and maintains the correct distance between the PGN and the outer membrane. This chain is Major outer membrane lipoprotein Lpp, found in Pectobacterium atrosepticum (strain SCRI 1043 / ATCC BAA-672) (Erwinia carotovora subsp. atroseptica).